Consider the following 320-residue polypeptide: ATP-dependent 6-phosphofructokinase (320 aa).

Position 12 (Gly12) interacts with ATP. ADP-binding positions include 22 to 26 (RGVVR) and 55 to 60 (RYSVSD). ATP is bound by residues 73-74 (RF) and 103-106 (GDGS). Asp104 is a binding site for Mg(2+). 126-128 (TID) lines the substrate pocket. Asp128 functions as the Proton acceptor in the catalytic mechanism. Residue Arg155 coordinates ADP. Residues Arg163 and 170 to 172 (MGR) each bind substrate. Residues 186–188 (GCE), Lys212, and 214–216 (KKH) each bind ADP. Substrate contacts are provided by residues Glu223, Arg244, and 250–253 (HIQR).

It belongs to the phosphofructokinase type A (PFKA) family. ATP-dependent PFK group I subfamily. Prokaryotic clade 'B1' sub-subfamily. In terms of assembly, homotetramer. The cofactor is Mg(2+).

It is found in the cytoplasm. The catalysed reaction is beta-D-fructose 6-phosphate + ATP = beta-D-fructose 1,6-bisphosphate + ADP + H(+). The protein operates within carbohydrate degradation; glycolysis; D-glyceraldehyde 3-phosphate and glycerone phosphate from D-glucose: step 3/4. Allosterically activated by ADP and other diphosphonucleosides, and allosterically inhibited by phosphoenolpyruvate. Functionally, catalyzes the phosphorylation of D-fructose 6-phosphate to fructose 1,6-bisphosphate by ATP, the first committing step of glycolysis. In Citrobacter koseri (strain ATCC BAA-895 / CDC 4225-83 / SGSC4696), this protein is ATP-dependent 6-phosphofructokinase.